Here is a 488-residue protein sequence, read N- to C-terminus: Histone deacetylase 2 (488 aa).

Residues 9–322 (KKKVCYYYDG…WTYETAVALD (314 aa)) are histone deacetylase. 2 residues coordinate 1D-myo-inositol 1,4,5,6-tetrakisphosphate: Gly-28 and Lys-32. His-142 is a catalytic residue. Zn(2+) contacts are provided by Asp-177, His-179, and Asp-265. Arg-271 is a 1D-myo-inositol 1,4,5,6-tetrakisphosphate binding site. Residues 389–488 (AVHEDSGDED…GAKSEQLSNP (100 aa)) are disordered. A compositionally biased stretch (basic and acidic residues) spans 402–417 (PDKRISIRASDKRIAC). The segment covering 418-428 (DEEFSDSEDEG) has biased composition (acidic residues). Basic and acidic residues predominate over residues 429–481 (EGGRRNVADHKKGAKKARIEEDKKETEDKKADVKEEDKSKDNSGEKTDTKGAK).

This sequence belongs to the histone deacetylase family. HD type 1 subfamily. Requires Zn(2+) as cofactor.

The protein localises to the nucleus. Its subcellular location is the cytoplasm. It catalyses the reaction N(6)-acetyl-L-lysyl-[histone] + H2O = L-lysyl-[histone] + acetate. The catalysed reaction is N(6)-acetyl-L-lysyl-[protein] + H2O = L-lysyl-[protein] + acetate. It carries out the reaction N(6)-(2E)-butenoyl-L-lysyl-[protein] + H2O = (2E)-2-butenoate + L-lysyl-[protein]. The enzyme catalyses N(6)-(2-hydroxyisobutanoyl)-L-lysyl-[protein] + H2O = 2-hydroxy-2-methylpropanoate + L-lysyl-[protein]. It catalyses the reaction N(6)-[(S)-lactoyl]-L-lysyl-[protein] + H2O = (S)-lactate + L-lysyl-[protein]. Inositol tetraphosphate (1D-myo-inositol 1,4,5,6-tetrakisphosphate) may act as an intermolecular glue between HDAC2 and N-Cor repressor complex components. Histone deacetylase that catalyzes the deacetylation of lysine residues on the N-terminal part of the core histones (H2A, H2B, H3 and H4). Histone deacetylation gives a tag for epigenetic repression and plays an important role in transcriptional regulation, cell cycle progression and developmental events. Histone deacetylases act via the formation of large multiprotein complexes. Also deacetylates non-histone proteins. In addition to protein deacetylase activity, also acts as a protein-lysine deacylase by recognizing other acyl groups: catalyzes removal of (2E)-butenoyl (crotonyl), lactoyl (lactyl) and 2-hydroxyisobutanoyl (2-hydroxyisobutyryl) acyl groups from lysine residues, leading to protein decrotonylation, delactylation and de-2-hydroxyisobutyrylation, respectively. In Gallus gallus (Chicken), this protein is Histone deacetylase 2 (HDAC2).